A 424-amino-acid polypeptide reads, in one-letter code: Imidazolonepropionase (424 aa).

Positions 84 and 86 each coordinate Fe(3+). Residues His84 and His86 each coordinate Zn(2+). 4-imidazolone-5-propanoate is bound by residues Arg93, Tyr156, and His189. Position 156 (Tyr156) interacts with N-formimidoyl-L-glutamate. Fe(3+) is bound at residue His254. His254 is a Zn(2+) binding site. Glu257 contributes to the 4-imidazolone-5-propanoate binding site. Asp328 lines the Fe(3+) pocket. Residue Asp328 coordinates Zn(2+). N-formimidoyl-L-glutamate contacts are provided by Asn330 and Gly332. Ser333 lines the 4-imidazolone-5-propanoate pocket.

The protein belongs to the metallo-dependent hydrolases superfamily. HutI family. Zn(2+) is required as a cofactor. Requires Fe(3+) as cofactor.

Its subcellular location is the cytoplasm. It carries out the reaction 4-imidazolone-5-propanoate + H2O = N-formimidoyl-L-glutamate. It functions in the pathway amino-acid degradation; L-histidine degradation into L-glutamate; N-formimidoyl-L-glutamate from L-histidine: step 3/3. Functionally, catalyzes the hydrolytic cleavage of the carbon-nitrogen bond in imidazolone-5-propanoate to yield N-formimidoyl-L-glutamate. It is the third step in the universal histidine degradation pathway. This chain is Imidazolonepropionase, found in Geobacillus kaustophilus (strain HTA426).